A 569-amino-acid polypeptide reads, in one-letter code: MIDDQVIAAARGDIPCDLVLKNAQIVNVFSGEIQKGDVAVQGGKVAALDSRDAKITVDLEGRFLTPGLIDAHVHIESSMVSPYQYARTVILHGTTAVIADPHEIANVMGVDGVSYMIQAAEGAPVGIFYAVPSCVPATHLETAGASLETKDILPFLEHPKIVGLAEMMNFPGVIYRDPEVLAKMNAAKSHRKTVDGHAPGLSGADLQAYLAAGAASDHECTTPEEALEKLASGMRIMIRQGTGAKNLNDLLPIVTEQNSRRIMFCSDDRHPYDLLEKGHINIMVARSIRQGVDPVTAIRMASLNTAEYFGLRDRGGIAPGMRADLLVVPDLVDFHVQDVYSGGVKVVEDGCGLPSPMDPPPRPQTSSMNVDVDGLDFTIKAGSGKARIIKLIPDQVVTAAMTGDVLQKNGEALSDPGNDILKIAVVERHKGTGNIGLGFVNGFGLQKGALASSVAHDSHNIIVVGVDDADMKAAVKAVADMGGGLAAAAGGKALSVCPLPIAGLMSDQPMEQVRRQLDILMQTAKELGAKAEDPFMSLSFLALPVIPELKITDKGLVDVNLFNFVSLFE.

The protein belongs to the metallo-dependent hydrolases superfamily. Adenine deaminase family. It depends on Mn(2+) as a cofactor.

It carries out the reaction adenine + H2O + H(+) = hypoxanthine + NH4(+). The chain is Adenine deaminase from Desulfatibacillum aliphaticivorans.